The following is a 214-amino-acid chain: ATP-dependent Clp protease proteolytic subunit (214 aa).

Ser114 (nucleophile) is an active-site residue. His139 is a catalytic residue.

Belongs to the peptidase S14 family. Fourteen ClpP subunits assemble into 2 heptameric rings which stack back to back to give a disk-like structure with a central cavity, resembling the structure of eukaryotic proteasomes.

It is found in the cytoplasm. The catalysed reaction is Hydrolysis of proteins to small peptides in the presence of ATP and magnesium. alpha-casein is the usual test substrate. In the absence of ATP, only oligopeptides shorter than five residues are hydrolyzed (such as succinyl-Leu-Tyr-|-NHMec, and Leu-Tyr-Leu-|-Tyr-Trp, in which cleavage of the -Tyr-|-Leu- and -Tyr-|-Trp bonds also occurs).. Cleaves peptides in various proteins in a process that requires ATP hydrolysis. Has a chymotrypsin-like activity. Plays a major role in the degradation of misfolded proteins. This chain is ATP-dependent Clp protease proteolytic subunit, found in Nitrosomonas europaea (strain ATCC 19718 / CIP 103999 / KCTC 2705 / NBRC 14298).